Reading from the N-terminus, the 202-residue chain is Recombination protein RecR (202 aa).

The C4-type zinc finger occupies 57 to 72; that stretch reads CGVCRTFTEQPCCDIC. Residues 81-176 form the Toprim domain; that stretch reads GQICVVESPS…STTKIAHGVP (96 aa).

The protein belongs to the RecR family.

May play a role in DNA repair. It seems to be involved in an RecBC-independent recombinational process of DNA repair. It may act with RecF and RecO. The protein is Recombination protein RecR of Hamiltonella defensa subsp. Acyrthosiphon pisum (strain 5AT).